A 33-amino-acid chain; its full sequence is Cysteine-rich venom protein (33 aa).

The segment at 1-33 (NVDFNSESTRRKKKQKEIVDLHNSLRRRVSPTA) is disordered. Basic residues predominate over residues 24-33 (SLRRRVSPTA).

Belongs to the CRISP family. In terms of processing, contains 8 disulfide bonds. In terms of tissue distribution, expressed by the venom gland.

It localises to the secreted. Functionally, blocks contraction of smooth muscle elicited by high potassium-induced depolarization, but does not block caffeine-stimulated contraction. May target voltage-gated calcium channels on smooth muscle (Cav). The protein is Cysteine-rich venom protein of Naja naja (Indian cobra).